A 419-amino-acid chain; its full sequence is Cyclin-B2-2 (419 aa).

The segment at 79–116 (QPSSAPLAPIGSERQKRTADSAFHGPADMECTKITSDD) is disordered.

Belongs to the cyclin family. Cyclin AB subfamily. In terms of assembly, interacts with CDKB2-1. In terms of tissue distribution, expressed in the intercalary meristem and the elongation zone of internodes. Expressed in adventitious roots at all nodes under submergence conditions.

The protein localises to the nucleus. Functionally, involved in the control of the cell cycle at the G2/M (mitosis) transition. May associate to CDKB2-1 and activate CDKB2-1 kinase to promote cell division. The protein is Cyclin-B2-2 (CYCB2-2) of Oryza sativa subsp. indica (Rice).